The following is a 171-amino-acid chain: Peptide deformylase 1 (171 aa).

Residues Cys99 and His141 each contribute to the Fe cation site. Glu142 is a catalytic residue.

The protein belongs to the polypeptide deformylase family. It depends on Fe(2+) as a cofactor.

The enzyme catalyses N-terminal N-formyl-L-methionyl-[peptide] + H2O = N-terminal L-methionyl-[peptide] + formate. Its function is as follows. Removes the formyl group from the N-terminal Met of newly synthesized proteins. Requires at least a dipeptide for an efficient rate of reaction. N-terminal L-methionine is a prerequisite for activity but the enzyme has broad specificity at other positions. The polypeptide is Peptide deformylase 1 (Xanthomonas axonopodis pv. citri (strain 306)).